Consider the following 342-residue polypeptide: Protein-ribulosamine 3-kinase, chloroplastic (342 aa).

Residues 1 to 46 (MANVALLSAASPSTSSAAPRLRHVARRRPSRRSACPRSAASRLSIM) constitute a chloroplast transit peptide. ATP is bound at residue 141-143 (EFI). The active-site Proton acceptor is aspartate 246.

Belongs to the fructosamine kinase family.

It is found in the plastid. The protein resides in the chloroplast. The enzyme catalyses N(6)-D-ribulosyl-L-lysyl-[protein] + ATP = N(6)-(3-O-phospho-D-ribulosyl)-L-lysyl-[protein] + ADP + H(+). It carries out the reaction N(6)-(D-erythrulosyl)-L-lysyl-[protein] + ATP = N(6)-(3-O-phospho-D-erythrulosyl)-L-lysyl-[protein] + ADP + H(+). Initiates a process leading to the deglycation of proteins. Phosphorylates low-molecular-mass and protein-bound erythrulosamines and ribulosamines, but not fructosamines or psicosamines, on the third carbon of the sugar moiety. Protein-bound erythrulosamine 3-phosphates and ribulosamine 3-phosphates are unstable and decompose under physiological conditions. The protein is Protein-ribulosamine 3-kinase, chloroplastic of Oryza sativa subsp. japonica (Rice).